The sequence spans 84 residues: Cell division topological specificity factor (84 aa).

It belongs to the MinE family.

Prevents the cell division inhibition by proteins MinC and MinD at internal division sites while permitting inhibition at polar sites. This ensures cell division at the proper site by restricting the formation of a division septum at the midpoint of the long axis of the cell. The sequence is that of Cell division topological specificity factor from Cupriavidus pinatubonensis (strain JMP 134 / LMG 1197) (Cupriavidus necator (strain JMP 134)).